We begin with the raw amino-acid sequence, 400 residues long: tRNA-specific adenosine deaminase TAD3 (400 aa).

Residues 250-385 (SQWHPLRHAS…KSLNHHYAVF (136 aa)) enclose the CMP/dCMP-type deaminase domain. Histidine 257 lines the Zn(2+) pocket. A disordered region spans residues 273–320 (LFPNPSKIFDQDHVPPSNTDSPAKKQKTSSQSPDVQNDSREETVRDPS). Residues 309-320 (NDSREETVRDPS) are compositionally biased toward basic and acidic residues. Positions 339 and 342 each coordinate Zn(2+).

This sequence belongs to the cytidine and deoxycytidylate deaminase family. ADAT3 subfamily. As to quaternary structure, interacts with TAD2.

The protein localises to the nucleus. Its subcellular location is the cytoplasm. The enzyme catalyses adenosine(34) in tRNA + H2O + H(+) = inosine(34) in tRNA + NH4(+). Functionally, involved in RNA editing. Catalyzes the specific deamination of adenosine-34 in several cytosolic tRNA species. Generates inosine at the wobble position of the anticodon loop. This Arabidopsis thaliana (Mouse-ear cress) protein is tRNA-specific adenosine deaminase TAD3.